Here is a 504-residue protein sequence, read N- to C-terminus: Glucose-6-phosphate isomerase (504 aa).

Residue Glu333 is the Proton donor of the active site. Catalysis depends on residues His364 and Lys473.

The protein belongs to the GPI family.

Its subcellular location is the cytoplasm. The catalysed reaction is alpha-D-glucose 6-phosphate = beta-D-fructose 6-phosphate. It functions in the pathway carbohydrate biosynthesis; gluconeogenesis. The protein operates within carbohydrate degradation; glycolysis; D-glyceraldehyde 3-phosphate and glycerone phosphate from D-glucose: step 2/4. Functionally, catalyzes the reversible isomerization of glucose-6-phosphate to fructose-6-phosphate. In Stenotrophomonas maltophilia (strain R551-3), this protein is Glucose-6-phosphate isomerase.